The sequence spans 949 residues: Glycine dehydrogenase (decarboxylating) (949 aa).

Lysine 699 carries the post-translational modification N6-(pyridoxal phosphate)lysine.

The protein belongs to the GcvP family. In terms of assembly, the glycine cleavage system is composed of four proteins: P, T, L and H. Pyridoxal 5'-phosphate is required as a cofactor.

The enzyme catalyses N(6)-[(R)-lipoyl]-L-lysyl-[glycine-cleavage complex H protein] + glycine + H(+) = N(6)-[(R)-S(8)-aminomethyldihydrolipoyl]-L-lysyl-[glycine-cleavage complex H protein] + CO2. Its function is as follows. The glycine cleavage system catalyzes the degradation of glycine. The P protein binds the alpha-amino group of glycine through its pyridoxal phosphate cofactor; CO(2) is released and the remaining methylamine moiety is then transferred to the lipoamide cofactor of the H protein. The protein is Glycine dehydrogenase (decarboxylating) of Roseobacter denitrificans (strain ATCC 33942 / OCh 114) (Erythrobacter sp. (strain OCh 114)).